We begin with the raw amino-acid sequence, 352 residues long: Small ribosomal subunit biogenesis GTPase RsgA 1 (352 aa).

Residues 1-24 (MAKKKKLTQGQVRRVRDNQQKRLK) form a disordered region. One can recognise a CP-type G domain in the interval 104-272 (TSVLTRPDYY…LIDSPGVREF (169 aa)). GTP is bound by residues 160–163 (NKID) and 214–222 (GQSGVGKSS). Positions 296, 301, 303, and 309 each coordinate Zn(2+).

The protein belongs to the TRAFAC class YlqF/YawG GTPase family. RsgA subfamily. Monomer. Associates with 30S ribosomal subunit, binds 16S rRNA. Zn(2+) is required as a cofactor.

The protein localises to the cytoplasm. In terms of biological role, one of several proteins that assist in the late maturation steps of the functional core of the 30S ribosomal subunit. Helps release RbfA from mature subunits. May play a role in the assembly of ribosomal proteins into the subunit. Circularly permuted GTPase that catalyzes slow GTP hydrolysis, GTPase activity is stimulated by the 30S ribosomal subunit. This chain is Small ribosomal subunit biogenesis GTPase RsgA 1, found in Vibrio vulnificus (strain CMCP6).